A 943-amino-acid polypeptide reads, in one-letter code: MTDYKATLNLPETAFPMKAGLPQREPETLKFWNDIGLYQKLRAIGGDRPKFVLHDGPPYANGSIHIGHAVNKILKDIIVRSKTLAGYDAPYVPGWDCHGLPIEHKVETTHGKNLPADKTRELCREYAAEQIEGQKADFIRLGVLGEWDNPYKTMNFANEANEIRALAEMVKQDFVFKGLKPVNWCFDCGSALAEAEVEYADKKSPTIDVGFPVADADKLAAAFGLAALDKPAQIVIWTTTPWTIPANQALNVHPEIDYALVDAGDRYLVLAEALVESCLARYQREGKVVATAKGEALELINFRHPFYERLSPVYLADYVALDAGTGIVHSSPAYGEDDFYTCKRYGMSNDDILSPVQSNGVYVDSLPFFGGQFIWKANPNVVAKLEEVGSLLAHETINHSYMHCWRHKTPLIYRATAQWFVGMDKQPRQGASLRERALEAITQTEFVPGWGQARLHGMIAGRPDWCISRQRNWGVPIPFFLHKASGELHPRTVELMEEVAQRVEKEGIEAWFKLDAAELLGEEAAQYEKINDTLDVWFDSGTTHWHVLRGSHRIGHASGPVADLYLEGSDQHRGWFHSSLLTGCAIDNHAPYRQLLTHGFTVDESGRKMSKSLGNTVVPQTVIDTLGADILRLWVASTDYSGEIAVSQQILQRSADAYRRIRNTTRFLLSNLNGFDPATDLLPPQEMLALDRWAVDRALLLQREIEEAYREYRFWNVYSKVHNFCVQELGGFYLDIIKDRQYTTGANSVARRSCQTALFHIAEALVRWIAPILAFTAEEVWKFLPGERAESVMLATWYDGLNELPADVTLNRQYWEQVMAVKAAVNKELENQRAAKAVGGNLQAEVTLYAEDALQAQLAKLGNELRFVLITSTATLAPLSAAPADAVDSEVAGLKLKVVKSTHAKCGRCWHHREDVGQHAAHPDLCGRCIENIEGSGEVRHYA.

Positions 58 to 68 (PYANGSIHIGH) match the 'HIGH' region motif. An L-isoleucyl-5'-AMP-binding site is contributed by Glu567. Positions 608 to 612 (KMSKS) match the 'KMSKS' region motif. Lys611 is a binding site for ATP. Positions 906, 909, 926, and 929 each coordinate Zn(2+).

The protein belongs to the class-I aminoacyl-tRNA synthetase family. IleS type 1 subfamily. As to quaternary structure, monomer. Zn(2+) serves as cofactor.

The protein resides in the cytoplasm. It carries out the reaction tRNA(Ile) + L-isoleucine + ATP = L-isoleucyl-tRNA(Ile) + AMP + diphosphate. Functionally, catalyzes the attachment of isoleucine to tRNA(Ile). As IleRS can inadvertently accommodate and process structurally similar amino acids such as valine, to avoid such errors it has two additional distinct tRNA(Ile)-dependent editing activities. One activity is designated as 'pretransfer' editing and involves the hydrolysis of activated Val-AMP. The other activity is designated 'posttransfer' editing and involves deacylation of mischarged Val-tRNA(Ile). This Pseudomonas aeruginosa (strain ATCC 15692 / DSM 22644 / CIP 104116 / JCM 14847 / LMG 12228 / 1C / PRS 101 / PAO1) protein is Isoleucine--tRNA ligase.